A 267-amino-acid polypeptide reads, in one-letter code: Apolipoprotein A-I (267 aa).

The signal sequence occupies residues 1-18 (MKAAVLTLAVLFLTGSQA). Tandem repeats lie at residues 68–89 (LKLL…EDLG) and 90–111 (PVTQ…QEMS). Residues 68 to 267 (LKLLDNWDSL…EEYAKKLSSQ (200 aa)) are 10 X approximate tandem repeats. The residue at position 110 (Met-110) is a Methionine sulfoxide. One copy of the 3; half-length repeat lies at 112 to 122 (KDLEEVKAKVQ). 5 repeat units span residues 123–144 (PYLD…QKLE), 145–166 (PLRT…EKLS), 167–188 (PLAE…TQLA), 189–210 (PYSD…ESGG), and 211–232 (ASLA…EKAK). Residues 233–243 (PALEDLRQGLL) form a 9; half-length repeat. Repeat 10 spans residues 244–267 (PVLESFKVSFLSALEEYAKKLSSQ).

It belongs to the apolipoprotein A1/A4/E family. In terms of assembly, homodimer. Interacts with APOA1BP and CLU. Component of a sperm activating protein complex (SPAP), consisting of APOA1, an immunoglobulin heavy chain, an immunoglobulin light chain and albumin. Interacts with NDRG1. Interacts with SCGB3A2. Interacts with NAXE and YJEFN3. Post-translationally, glycosylated. In terms of processing, palmitoylated. Phosphorylation sites are present in the extracellular medium.

Its subcellular location is the secreted. Functionally, participates in the reverse transport of cholesterol from tissues to the liver for excretion by promoting cholesterol efflux from tissues and by acting as a cofactor for the lecithin cholesterol acyltransferase (LCAT). As part of the SPAP complex, activates spermatozoa motility. This chain is Apolipoprotein A-I (APOA1), found in Cebus imitator (Panamanian white-faced capuchin).